We begin with the raw amino-acid sequence, 748 residues long: E3 ubiquitin-protein ligase DTX3L (748 aa).

Position 2 is an N-acetylalanine (alanine 2). The residue at position 9 (serine 9) is a Phosphoserine. Disordered regions lie at residues aspartate 94–threonine 117, glutamate 209–glutamine 238, and glutamine 528–serine 562. Over residues serine 101–threonine 117 the composition is skewed to polar residues. Composition is skewed to basic and acidic residues over residues glutamate 209 to arginine 219 and threonine 227 to proline 236. Serine 215 is subject to Phosphoserine. The residue at position 536 (serine 536) is a Phosphoserine. Residues cysteine 569–leucine 608 form an RING-type zinc finger.

Belongs to the Deltex family. Homodimer and heterodimer. Can heterodimerize with DTX1, enhancing its ubiquitin ligase activity in vitro. Interacts (via N-terminus) with ADP ribosyltransferase PARP9/BAL1 (via PARP catalytic domain) forming a stable complex; the interaction is required to activate PARP9 but is dispensable for DTX3L catalytic activity. Forms a complex with STAT1 and PARP9 independently of IFNB1 or IFNG-mediated STAT1 'Tyr-701' phosphorylation. Found in a complex with PARP9, STAT1 and H2BC9. Found in a complex with E3 ligase ITCH and ESCRT-0 components HGS and STAM. Interacts (via C-terminus) with ITCH; the interaction is increased upon CXCL12 stimulation and inhibits ITCH catalytic activity; the interaction is direct. Interacts with HGS and STAM; the interaction brings together HGS and STAM and promotes their recruitment to early endosomes. In terms of processing, autoubiquitinated.

The protein resides in the cytoplasm. It is found in the nucleus. The protein localises to the early endosome membrane. Its subcellular location is the lysosome membrane. The enzyme catalyses S-ubiquitinyl-[E2 ubiquitin-conjugating enzyme]-L-cysteine + [acceptor protein]-L-lysine = [E2 ubiquitin-conjugating enzyme]-L-cysteine + N(6)-ubiquitinyl-[acceptor protein]-L-lysine.. Its pathway is protein modification; protein ubiquitination. Binding to PARP9 enhances DTX3L catalytic activity. Functionally, E3 ubiquitin-protein ligase which, in association with ADP-ribosyltransferase PARP9, plays a role in DNA damage repair and in interferon-mediated antiviral responses. Monoubiquitinates several histones, including histone H2A, H2B, H3 and H4. In response to DNA damage, mediates monoubiquitination of 'Lys-91' of histone H4 (H4K91ub1). The exact role of H4K91ub1 in DNA damage response is still unclear but it may function as a licensing signal for additional histone H4 post-translational modifications such as H4 'Lys-20' methylation (H4K20me). PARP1-dependent PARP9-DTX3L-mediated ubiquitination promotes the rapid and specific recruitment of 53BP1/TP53BP1, UIMC1/RAP80, and BRCA1 to DNA damage sites. By monoubiquitinating histone H2B H2BC9/H2BJ and thereby promoting chromatin remodeling, positively regulates STAT1-dependent interferon-stimulated gene transcription and thus STAT1-mediated control of viral replication. Independently of its catalytic activity, promotes the sorting of chemokine receptor CXCR4 from early endosome to lysosome following CXCL12 stimulation by reducing E3 ligase ITCH activity and thus ITCH-mediated ubiquitination of endosomal sorting complex required for transport ESCRT-0 components HGS and STAM. In addition, required for the recruitment of HGS and STAM to early endosomes. This Mus musculus (Mouse) protein is E3 ubiquitin-protein ligase DTX3L (Dtx3l).